Reading from the N-terminus, the 296-residue chain is Lipoyl synthase (296 aa).

[4Fe-4S] cluster is bound by residues cysteine 35, cysteine 40, cysteine 46, cysteine 61, cysteine 65, cysteine 68, and serine 274. The Radical SAM core domain occupies 47 to 263 (WSSKHVTVMI…KEAAYARGFL (217 aa)).

Belongs to the radical SAM superfamily. Lipoyl synthase family. [4Fe-4S] cluster serves as cofactor.

It is found in the cytoplasm. The catalysed reaction is [[Fe-S] cluster scaffold protein carrying a second [4Fe-4S](2+) cluster] + N(6)-octanoyl-L-lysyl-[protein] + 2 oxidized [2Fe-2S]-[ferredoxin] + 2 S-adenosyl-L-methionine + 4 H(+) = [[Fe-S] cluster scaffold protein] + N(6)-[(R)-dihydrolipoyl]-L-lysyl-[protein] + 4 Fe(3+) + 2 hydrogen sulfide + 2 5'-deoxyadenosine + 2 L-methionine + 2 reduced [2Fe-2S]-[ferredoxin]. It functions in the pathway protein modification; protein lipoylation via endogenous pathway; protein N(6)-(lipoyl)lysine from octanoyl-[acyl-carrier-protein]: step 2/2. Functionally, catalyzes the radical-mediated insertion of two sulfur atoms into the C-6 and C-8 positions of the octanoyl moiety bound to the lipoyl domains of lipoate-dependent enzymes, thereby converting the octanoylated domains into lipoylated derivatives. The protein is Lipoyl synthase of Neorickettsia sennetsu (strain ATCC VR-367 / Miyayama) (Ehrlichia sennetsu).